The following is a 40-amino-acid chain: CGDINAPCQSDCDCCGYSVTCDCYWGNECKCRESNFAIGM.

Intrachain disulfides connect cysteine 1–cysteine 15, cysteine 8–cysteine 21, cysteine 14–cysteine 31, and cysteine 23–cysteine 29.

Belongs to the neurotoxin 03 (Tx2) family. 05 subfamily. Expressed by the venom gland.

It is found in the secreted. Potent insecticidal toxin that binds to two distinct sites in insect sodium channels, with close affinity (Kd1=34.7 pM and Kd2=35.1 pM). Its association is rather fast (1.4 and 8.5 minutes, respectively for sites 1 and 2) and its dissociation is a slower process (5.4 and 32.8 minutes, respectively). On rat brain synaptosomes the toxin partially competes (~30%) with the beta-toxin CssIV, but does not compete with the alpha-toxin AaII, nor with the beta-toxin Ts VII. On cockroach nerve cord synaptosomes, the toxin does not compete with the anti-insect toxin LqqIT1, but it competes with the 'alpha-like' toxin BomIV (IC(50)=80 pM). In cockroach neurons, the toxin inhibits the inactivation of sodium channels and it shifts the sodium channel activation to hyperpolarizing potentials. Hence, it behaves like an 'alpha-like' toxin and binds preferentially to site 3 on the insect Nav channel, located on the domain IV. The toxin may also inhibit the N-methyl-D-aspartate (NMDA)-subtype of ionotropic glutamate receptor (GRIN). In vivo, the toxin causes excitatory effects on insects. This is Beta/delta-ctenitoxin-Pr1a from Phoneutria reidyi (Brazilian Amazonian armed spider).